A 432-amino-acid polypeptide reads, in one-letter code: Glutamyl-tRNA reductase (432 aa).

Substrate is bound by residues 55–58, serine 114, 119–121, and glutamine 125; these read TCNR and ETQ. Residue cysteine 56 is the Nucleophile of the active site. An NADP(+)-binding site is contributed by 194-199; it reads GAGEMI.

It belongs to the glutamyl-tRNA reductase family. Homodimer.

The enzyme catalyses (S)-4-amino-5-oxopentanoate + tRNA(Glu) + NADP(+) = L-glutamyl-tRNA(Glu) + NADPH + H(+). It participates in porphyrin-containing compound metabolism; protoporphyrin-IX biosynthesis; 5-aminolevulinate from L-glutamyl-tRNA(Glu): step 1/2. Its function is as follows. Catalyzes the NADPH-dependent reduction of glutamyl-tRNA(Glu) to glutamate 1-semialdehyde (GSA). This chain is Glutamyl-tRNA reductase, found in Burkholderia pseudomallei (strain 1710b).